We begin with the raw amino-acid sequence, 325 residues long: Anthranilate phosphoribosyltransferase (325 aa).

Residues glycine 73, 76-77 (GD), threonine 81, 83-86 (NIST), 100-108 (KHGNVSITS), and serine 112 each bind 5-phospho-alpha-D-ribose 1-diphosphate. Residue glycine 73 coordinates anthranilate. Position 85 (serine 85) interacts with Mg(2+). Residue asparagine 103 coordinates anthranilate. Arginine 158 serves as a coordination point for anthranilate. Residues aspartate 216 and glutamate 217 each coordinate Mg(2+).

Belongs to the anthranilate phosphoribosyltransferase family. Homodimer. It depends on Mg(2+) as a cofactor.

It carries out the reaction N-(5-phospho-beta-D-ribosyl)anthranilate + diphosphate = 5-phospho-alpha-D-ribose 1-diphosphate + anthranilate. The protein operates within amino-acid biosynthesis; L-tryptophan biosynthesis; L-tryptophan from chorismate: step 2/5. Catalyzes the transfer of the phosphoribosyl group of 5-phosphorylribose-1-pyrophosphate (PRPP) to anthranilate to yield N-(5'-phosphoribosyl)-anthranilate (PRA). The sequence is that of Anthranilate phosphoribosyltransferase from Methanococcus aeolicus (strain ATCC BAA-1280 / DSM 17508 / OCM 812 / Nankai-3).